The primary structure comprises 514 residues: Polygalacturonase (514 aa).

Residues 1–22 form the signal peptide; that stretch reads MAMKFIAPMAFVAMQLIIMAAA. The propeptide occupies 23–45; that stretch reads EDQSAQIMLDSDIEQYLRSNRSL. 5 PbH1 repeats span residues 214–240, 241–262, 264–284, 294–315, and 323–344; these read CEGVKIIGISITAPRDSPNTDGIDIFA, SKNFHLQKNTIGTGDDCVAIGT, SSNIVIEDLICGPGHGISIGS, VSYVHVNGAKFIDTQNGLRIKT, and ASHIIYENVEMINSENPILINQ. Residue Asp255 is the Proton donor of the active site. Residue His278 is part of the active site. The propeptide occupies 434–514; sequence AKRKESKSHK…CSRHGKIYHP (81 aa). N-linked (GlcNAc...) asparagine glycosylation is found at Asn460 and Asn472.

The protein belongs to the glycosyl hydrolase 28 family.

It localises to the secreted. The protein localises to the plastid. The protein resides in the amyloplast. It is found in the cell wall. It carries out the reaction (1,4-alpha-D-galacturonosyl)n+m + H2O = (1,4-alpha-D-galacturonosyl)n + (1,4-alpha-D-galacturonosyl)m.. This Cryptomeria japonica (Japanese cedar) protein is Polygalacturonase.